The following is a 621-amino-acid chain: Signal recognition particle receptor subunit alpha homolog (621 aa).

The tract at residues 1-158 (MFDQLAVFTP…KKFEQYFRIK (158 aa)) is SRX. Residues 167–217 (HINPDNFTKNGSVPQSHNKNTKKKLRDTKGKKQSTGNVGSGRKWGRDGGML) form a disordered region. The span at 171-183 (DNFTKNGSVPQSH) shows a compositional bias: polar residues. Positions 185–198 (KNTKKKLRDTKGKK) are enriched in basic residues. Ser239 is subject to Phosphoserine. Positions 398-620 (YVFSIVGVNG…SVKWAVNTLM (223 aa)) are NG domain. Residues 404-411 (GVNGVGKS) and 510-514 (DTAGR) contribute to the GTP site. Phosphoserine is present on Ser523. 572–575 (SKCD) is a binding site for GTP.

This sequence belongs to the GTP-binding SRP family. Heterodimer of an alpha and a beta chain.

The protein resides in the endoplasmic reticulum membrane. Its function is as follows. Component of the SRP (signal recognition particle) receptor (SR). Ensures, in conjunction with the signal recognition particle, the correct targeting of the nascent secretory proteins to the endoplasmic reticulum membrane system. GTP hydrolysis may enhance the fidelity of and provide unidirectionality to the targeting reaction. It is important but not essential for cell growth. May be directly involved in mitochondrial protein import. This Saccharomyces cerevisiae (strain ATCC 204508 / S288c) (Baker's yeast) protein is Signal recognition particle receptor subunit alpha homolog (SRP101).